Reading from the N-terminus, the 248-residue chain is Inner membrane protein pE248R (248 aa).

Gly2 is lipidated: N-myristoyl glycine; by host. Residues 2–199 lie on the Cytoplasmic side of the membrane; it reads GGSTSKNSFK…ADAISAVFKN (198 aa). The helical transmembrane segment at 200–220 threads the bilayer; the sequence is IMVAAVVIVLIIVGFIAVFYF. At 221 to 248 the chain is on the extracellular side; it reads LHSRHRHEEEEEAEPLISNKVLKNAAVS.

It belongs to the asfivirus E248R family. In terms of assembly, interacts with A151R.

The protein localises to the host membrane. Its subcellular location is the virion membrane. Essential for viral fusion with host endosomal membrane and core release. This Ornithodoros (relapsing fever ticks) protein is Inner membrane protein pE248R.